Here is a 163-residue protein sequence, read N- to C-terminus: NADH-quinone oxidoreductase subunit I (163 aa).

2 consecutive 4Fe-4S ferredoxin-type domains span residues 53–83 and 94–123; these read LRRYPNGEERCIACKLCEAICPAQAITIEAG and VRYDIDMVKCIYCGFCQEACPVDAIVEGPN. [4Fe-4S] cluster contacts are provided by C63, C66, C69, C73, C103, C106, C109, and C113.

It belongs to the complex I 23 kDa subunit family. In terms of assembly, NDH-1 is composed of 14 different subunits. Subunits NuoA, H, J, K, L, M, N constitute the membrane sector of the complex. [4Fe-4S] cluster serves as cofactor.

The protein localises to the cell inner membrane. It carries out the reaction a quinone + NADH + 5 H(+)(in) = a quinol + NAD(+) + 4 H(+)(out). In terms of biological role, NDH-1 shuttles electrons from NADH, via FMN and iron-sulfur (Fe-S) centers, to quinones in the respiratory chain. The immediate electron acceptor for the enzyme in this species is believed to be ubiquinone. Couples the redox reaction to proton translocation (for every two electrons transferred, four hydrogen ions are translocated across the cytoplasmic membrane), and thus conserves the redox energy in a proton gradient. The polypeptide is NADH-quinone oxidoreductase subunit I (Chelativorans sp. (strain BNC1)).